Consider the following 424-residue polypeptide: 3-ketoacyl-CoA thiolase, peroxisomal (424 aa).

The N-terminal 26 residues, 1 to 26, are a transit peptide targeting the peroxisome; it reads MQRLQVVLGHLRGPADSGWMPQAAPC. A PTS2-type peroxisomal targeting signal region spans residues 1 to 26; sequence MQRLQVVLGHLRGPADSGWMPQAAPC. Residues Thr-59 and Thr-60 each carry the phosphothreonine modification. Cys-123 (acyl-thioester intermediate) is an active-site residue. Active-site proton acceptor residues include His-377 and Cys-408.

Belongs to the thiolase-like superfamily. Thiolase family. Homodimer. Interacts (via PTS2-type peroxisomal targeting signal region) with PEX7; leading to its translocation into peroxisomes.

Its subcellular location is the peroxisome. The enzyme catalyses an acyl-CoA + acetyl-CoA = a 3-oxoacyl-CoA + CoA. It carries out the reaction 2 acetyl-CoA = acetoacetyl-CoA + CoA. The catalysed reaction is tetradecanoyl-CoA + acetyl-CoA = 3-oxohexadecanoyl-CoA + CoA. It catalyses the reaction hexanoyl-CoA + acetyl-CoA = 3-oxooctanoyl-CoA + CoA. The enzyme catalyses 3-oxohexadecanedioyl-CoA + CoA = tetradecanedioyl-CoA + acetyl-CoA. It carries out the reaction 3-oxo-(6Z,9Z,12Z,15Z,18Z,21Z)-tetracosahexaenoyl-CoA + CoA = (4Z,7Z,10Z,13Z,16Z,19Z)-docosahexaenoyl-CoA + acetyl-CoA. Its pathway is lipid metabolism; peroxisomal fatty acid beta-oxidation. In terms of biological role, responsible for the thiolytic cleavage of straight chain 3-keto fatty acyl-CoAs (3-oxoacyl-CoAs). Plays an important role in fatty acid peroxisomal beta-oxidation. Catalyzes the cleavage of short, medium, long, and very long straight chain 3-oxoacyl-CoAs. The sequence is that of 3-ketoacyl-CoA thiolase, peroxisomal from Homo sapiens (Human).